Consider the following 78-residue polypeptide: Small ribosomal subunit protein uS17 (78 aa).

This sequence belongs to the universal ribosomal protein uS17 family. As to quaternary structure, part of the 30S ribosomal subunit.

One of the primary rRNA binding proteins, it binds specifically to the 5'-end of 16S ribosomal RNA. This Agrobacterium fabrum (strain C58 / ATCC 33970) (Agrobacterium tumefaciens (strain C58)) protein is Small ribosomal subunit protein uS17.